A 178-amino-acid chain; its full sequence is Cytochrome b6-f complex iron-sulfur subunit (178 aa).

Residues 20–42 (LLTFGTATGVALGALYPVANYFM) form a helical membrane-spanning segment. The Rieske domain occupies 65–161 (KTGWLATHQA…VDIEDDAVLV (97 aa)). [2Fe-2S] cluster is bound by residues cysteine 107, histidine 109, cysteine 125, and histidine 128. A disulfide bond links cysteine 112 and cysteine 127.

The protein belongs to the Rieske iron-sulfur protein family. The 4 large subunits of the cytochrome b6-f complex are cytochrome b6, subunit IV (17 kDa polypeptide, PetD), cytochrome f and the Rieske protein, while the 4 small subunits are PetG, PetL, PetM and PetN. The complex functions as a dimer. [2Fe-2S] cluster is required as a cofactor.

It localises to the cellular thylakoid membrane. It carries out the reaction 2 oxidized [plastocyanin] + a plastoquinol + 2 H(+)(in) = 2 reduced [plastocyanin] + a plastoquinone + 4 H(+)(out). Its function is as follows. Component of the cytochrome b6-f complex, which mediates electron transfer between photosystem II (PSII) and photosystem I (PSI), cyclic electron flow around PSI, and state transitions. The polypeptide is Cytochrome b6-f complex iron-sulfur subunit (Prochlorococcus marinus (strain AS9601)).